The following is a 745-amino-acid chain: Junction plakoglobin (745 aa).

Residue Met-1 is modified to N-acetylmethionine. Thr-14 carries O-linked (GlcNAc) threonine glycosylation. Phosphoserine occurs at positions 99 and 125. 12 ARM repeats span residues 132-171 (NYQDDAELATRALPELTKLLNDEDPVVVTKAAMIVNQLSK), 172-215 (KEAS…LSHH), 216-255 (REGLLAIFKSGGIPALVRMLSSPVESVLFYAITTLHNLLL), 258-297 (EGAKMAVRLADGLQKMVPLLNKNNPKFLAITTDCLQLLAY), 298-341 (GNQE…LSVC), 342-381 (PSNKPAIVEAGGMQALGKHLTSNSPRLVQNCLWTLRNLSD), 383-420 (ATKQEGLESVLKILVNQLSVDDVNVLTCATGTLSNLTC), 423-464 (SKNK…HLTS), 470-510 (EMAQ…NLAL), 512-551 (PANHAPLQEAAVIPRLVQLLVKAHQDAQRHVAAGTQQPYT), 574-613 (PMNRMEIFRLNTIPLFVQLLYSSVENIQRVAAGVLCELAQ), and 615-661 (KEAA…PDYR). The tract at residues 132–297 (NYQDDAELAT…TTDCLQLLAY (166 aa)) is interaction with DSC1 and DSG1. Position 182 is a phosphoserine (Ser-182). The interval 574 to 661 (PMNRMEIFRL…ISEDKNPDYR (88 aa)) is interaction with DSC1. Ser-665 and Ser-730 each carry phosphoserine.

It belongs to the beta-catenin family. Homodimer. Component of an E-cadherin/catenin adhesion complex composed of at least E-cadherin/CDH1 and gamma-catenin/JUP, and possibly alpha-catenin/CTNNA1; the complex is located to adherens junctions. The stable association of CTNNA1 is controversial as CTNNA1 was shown not to bind to F-actin when assembled in the complex. Interacts with MUC1. Interacts with CAV1. Interacts with PTPRJ. Interacts with DSG1. Interacts with DSC1 and DSC2. Interacts with PKP2. Interacts with PKP3 (via N-terminus); the interaction is required for PKP3 localization to desmosome cell-cell junctions. Interacts with DSG4. May be phosphorylated by FER. Expressed in the heart (at protein level).

It is found in the cell junction. It localises to the adherens junction. The protein resides in the desmosome. The protein localises to the cytoplasm. Its subcellular location is the cytoskeleton. It is found in the cell membrane. It localises to the nucleus. In terms of biological role, common junctional plaque protein. The membrane-associated plaques are architectural elements in an important strategic position to influence the arrangement and function of both the cytoskeleton and the cells within the tissue. The presence of plakoglobin in both the desmosomes and in the intermediate junctions suggests that it plays a central role in the structure and function of submembranous plaques. Acts as a substrate for VE-PTP and is required by it to stimulate VE-cadherin function in endothelial cells. Can replace beta-catenin in E-cadherin/catenin adhesion complexes which are proposed to couple cadherins to the actin cytoskeleton. The sequence is that of Junction plakoglobin from Homo sapiens (Human).